The primary structure comprises 401 residues: Haptoglobin (401 aa).

Positions 1 to 18 (MSALQAVVTLLLCGQLLA) are cleaved as a signal peptide. Sushi domains lie at 28–83 (DSCP…ECEE) and 85–142 (DSCP…ECEA). 3 disulfide bridges follow: C49–C81, C106–C140, and C144–C261. Residues 157 to 399 (IIGGSLDAKG…ILDWVRKTIA (243 aa)) enclose the Peptidase S1 domain. N-linked (GlcNAc...) asparagine glycosylation is found at N286 and N316. 2 disulfide bridges follow: C304-C335 and C346-C376. Residues 313-318 (APKNKT) are interaction with CD163.

Belongs to the peptidase S1 family. As to quaternary structure, tetramer of two alpha and two beta chains; disulfide-linked. The hemoglobin/haptoglobin complex is composed of a haptoglobin dimer bound to two hemoglobin alpha-beta dimers. Interacts with CD163. Interacts with ERGIC3. Expressed by the liver and secreted in plasma.

The protein localises to the secreted. It is found in the extracellular space. In terms of biological role, as a result of hemolysis, hemoglobin is found to accumulate in the kidney and is secreted in the urine. Haptoglobin captures, and combines with free plasma hemoglobin to allow hepatic recycling of heme iron and to prevent kidney damage. Haptoglobin also acts as an antioxidant, has antibacterial activity and plays a role in modulating many aspects of the acute phase response. Hemoglobin/haptoglobin complexes are rapidly cleared by the macrophage CD163 scavenger receptor expressed on the surface of liver Kupfer cells through an endocytic lysosomal degradation pathway. The chain is Haptoglobin (HP) from Bos taurus (Bovine).